The sequence spans 612 residues: Dihydroxy-acid dehydratase (612 aa).

Asp-81 is a Mg(2+) binding site. Cys-122 contributes to the [2Fe-2S] cluster binding site. The Mg(2+) site is built by Asp-123 and Lys-124. Lys-124 carries the N6-carboxylysine modification. A [2Fe-2S] cluster-binding site is contributed by Cys-193. Glu-489 contributes to the Mg(2+) binding site. The active-site Proton acceptor is the Ser-515.

This sequence belongs to the IlvD/Edd family. As to quaternary structure, homodimer. [2Fe-2S] cluster is required as a cofactor. Mg(2+) serves as cofactor.

It catalyses the reaction (2R)-2,3-dihydroxy-3-methylbutanoate = 3-methyl-2-oxobutanoate + H2O. It carries out the reaction (2R,3R)-2,3-dihydroxy-3-methylpentanoate = (S)-3-methyl-2-oxopentanoate + H2O. It functions in the pathway amino-acid biosynthesis; L-isoleucine biosynthesis; L-isoleucine from 2-oxobutanoate: step 3/4. The protein operates within amino-acid biosynthesis; L-valine biosynthesis; L-valine from pyruvate: step 3/4. In terms of biological role, functions in the biosynthesis of branched-chain amino acids. Catalyzes the dehydration of (2R,3R)-2,3-dihydroxy-3-methylpentanoate (2,3-dihydroxy-3-methylvalerate) into 2-oxo-3-methylpentanoate (2-oxo-3-methylvalerate) and of (2R)-2,3-dihydroxy-3-methylbutanoate (2,3-dihydroxyisovalerate) into 2-oxo-3-methylbutanoate (2-oxoisovalerate), the penultimate precursor to L-isoleucine and L-valine, respectively. The protein is Dihydroxy-acid dehydratase of Xanthomonas axonopodis pv. citri (strain 306).